The primary structure comprises 680 residues: Galactose oxidase (680 aa).

An N-terminal signal peptide occupies residues 1-24 (MKHFLSLALCFSSINAVAVTVPHK). A propeptide spanning residues 25–41 (SGGTGSPEGSLQFLSLR) is cleaved from the precursor. One can recognise an F5/8 type C domain in the interval 42 to 189 (ASAPIGSAIS…SIAEINVFQA (148 aa)). An intrachain disulfide couples cysteine 59 to cysteine 68. 5 Kelch repeats span residues 223–268 (RVLM…HDMF), 279–321 (QIVV…TMSD), 323–372 (RVFT…LYRS), 436–490 (KILT…VLPD), and 492–544 (STFI…LLLP). Residues 269-313 (CPGISMDGNGQIVVTGGNDAKKTSLYDSSSDSWIPGPDMQVARGY) constitute a cross-link (3'-(S-cysteinyl)-tyrosine (Cys-Tyr)). Tyrosine 313 contacts Cu cation. Tyrosine 536 and histidine 537 together coordinate Cu cation. The active-site Proton acceptor is tyrosine 536. Cysteines 556 and 559 form a disulfide. Histidine 622 serves as a coordination point for Cu cation.

In terms of assembly, monomer. Requires Cu(2+) as cofactor. In terms of processing, galactose oxidase contains a protein-derived free radical cofactor. In the active state, Tyr-313, which is cross-linked to Cys-269 via a thioether bond, is oxidized to a radical and acts with Cu(2+) as a two-electron acceptor in the oxidation reaction. The cross-link is believed to modulate the redox potential of the tyrosyl radical, which is further stabilized by a stacking interaction with Trp-331 in the active site. The post-translational formation of the cross-link is closely linked to the propeptide cleavage event, and both are copper-dependent, autocatalytic processes. The propeptide may act as an intramolecular chaperone, facilitating thioester bond formation and copper binding by positioning of active-site residues, including copper ligands.

The protein resides in the secreted. It catalyses the reaction D-galactose + O2 = D-galacto-hexodialdose + H2O2. Catalyzes the sterospecific oxidation of primary alcohols to the corresponding aldehydes. The biologically relevant substrate of the enzyme is not known as the enzyme exhibits broad substrate specificity from small alcohols through sugars to oligo- and polysaccharides. The sequence is that of Galactose oxidase (GAOA) from Gibberella zeae (strain ATCC MYA-4620 / CBS 123657 / FGSC 9075 / NRRL 31084 / PH-1) (Wheat head blight fungus).